The chain runs to 220 residues: Deoxyribose-phosphate aldolase (220 aa).

Aspartate 89 (proton donor/acceptor) is an active-site residue. Residue lysine 151 is the Schiff-base intermediate with acetaldehyde of the active site. Lysine 180 functions as the Proton donor/acceptor in the catalytic mechanism.

Belongs to the DeoC/FbaB aldolase family. DeoC type 1 subfamily.

Its subcellular location is the cytoplasm. The catalysed reaction is 2-deoxy-D-ribose 5-phosphate = D-glyceraldehyde 3-phosphate + acetaldehyde. The protein operates within carbohydrate degradation; 2-deoxy-D-ribose 1-phosphate degradation; D-glyceraldehyde 3-phosphate and acetaldehyde from 2-deoxy-alpha-D-ribose 1-phosphate: step 2/2. In terms of biological role, catalyzes a reversible aldol reaction between acetaldehyde and D-glyceraldehyde 3-phosphate to generate 2-deoxy-D-ribose 5-phosphate. The polypeptide is Deoxyribose-phosphate aldolase (Streptococcus mutans serotype c (strain ATCC 700610 / UA159)).